The sequence spans 308 residues: Ribosomal RNA large subunit methyltransferase F (308 aa).

Belongs to the methyltransferase superfamily. METTL16/RlmF family.

It localises to the cytoplasm. It catalyses the reaction adenosine(1618) in 23S rRNA + S-adenosyl-L-methionine = N(6)-methyladenosine(1618) in 23S rRNA + S-adenosyl-L-homocysteine + H(+). In terms of biological role, specifically methylates the adenine in position 1618 of 23S rRNA. This is Ribosomal RNA large subunit methyltransferase F from Salmonella dublin (strain CT_02021853).